The primary structure comprises 344 residues: L-rhamnose-proton symporter (344 aa).

Helical transmembrane passes span A4–A24, W38–L58, F68–I88, M101–I121, T137–L157, L175–A195, L214–I234, V259–G279, I290–L310, and V323–A343.

The protein belongs to the L-rhamnose transporter (TC 2.A.7.6) family.

It localises to the cell inner membrane. The catalysed reaction is L-rhamnopyranose(in) + H(+)(in) = L-rhamnopyranose(out) + H(+)(out). Uptake of L-rhamnose across the cytoplasmic membrane with the concomitant transport of protons into the cell (symport system). This Escherichia coli O9:H4 (strain HS) protein is L-rhamnose-proton symporter.